A 409-amino-acid chain; its full sequence is MDWGLAISSHPKPYSVTTGGNLWRSKHTTKNIYFASSWISKASRHKRETQIEHNVLRFQQPSLDHHYKCIRGGSTYQECNRKFVVKAISKQPLGFEAHASNPKNILDSVKNVLSAFYWFSYPYTMIGITLCAFSSSLLAVEKLSDISLSFLIGVLQGVLPQLFIEIYLCGVNQLYDLEIDKINKPHLPMASGQFSFKTGVIISAAFLALSFGFTWITGSWPLICNLVVIASSWTAYSIDVPLLRWKRYPFVAAMCMISTWALALPISYFHHMQTVVLKRPIGFPRSLGFLVAFMTFYSLGLALSKDIPDVEGDKEHGIDSFAVRLGQKRAFWICVSFFEMAFGVGILAGASCSHFWTKIFTGMGNAVLASILWYQAKSVDLSDKASTGSFYMFIWKLLYAGFFLMALIR.

A chloroplast-targeting transit peptide spans 1–44 (MDWGLAISSHPKPYSVTTGGNLWRSKHTTKNIYFASSWISKASR). The next 9 membrane-spanning stretches (helical) occupy residues 113 to 133 (LSAFYWFSYPYTMIGITLCAF), 148 to 168 (LSFLIGVLQGVLPQLFIEIYL), 200 to 220 (VIISAAFLALSFGFTWITGSW), 222 to 242 (LICNLVVIASSWTAYSIDVPL), 249 to 269 (PFVAAMCMISTWALALPISYF), 287 to 307 (LGFLVAFMTFYSLGLALSKDI), 330 to 350 (AFWICVSFFEMAFGVGILAGA), 354 to 374 (HFWTKIFTGMGNAVLASILWY), and 388 to 408 (GSFYMFIWKLLYAGFFLMALI).

This sequence belongs to the UbiA prenyltransferase family. Requires Mg(2+) as cofactor. It depends on Mn(2+) as a cofactor. The cofactor is Co(2+).

The protein localises to the plastid. The protein resides in the chloroplast membrane. It catalyses the reaction (6aS,11aS)-3,6a,9-trihydroxypterocarpan + dimethylallyl diphosphate = (6aS,11aS)-2-dimethylallyl-3,6a,9-trihydroxypterocarpan + diphosphate. The enzyme catalyses (6aS,11aS)-3,6a,9-trihydroxypterocarpan + dimethylallyl diphosphate = (6aS,11aS)-4-dimethylallyl-3,6a,9-trihydroxypterocarpan + diphosphate. The protein operates within phytoalexin biosynthesis; pterocarpan phytoalexin biosynthesis. In terms of biological role, proposed to be involved in the biosynthesis of pterocarpan phytoalexins, specifically glyceollins. Can act as a prenyltransferase towards glycinol which is the direct precursor of glyceollins. Seems to be specific for prenylation at C-4 thus producing glyceollin I. The protein is Glycinol 4-dimethylallyltransferase (G4DT) of Glycine max (Soybean).